The chain runs to 377 residues: Unsaturated glucuronyl hydrolase (377 aa).

Residue Asp-88 is the Nucleophile of the active site. Asp-149 (proton donor) is an active-site residue.

This sequence belongs to the glycosyl hydrolase 88 family. In terms of assembly, monomer.

Its subcellular location is the cytoplasm. It carries out the reaction beta-D-Delta(4)-GlcA-(1-&gt;4)-beta-D-Glc-(1-&gt;4)-alpha-L-Rha-(1-&gt;3)-D-Glc + H2O = beta-D-Glc-(1-&gt;4)-alpha-L-Rha-(1-&gt;3)-D-Glc + 5-dehydro-4-deoxy-D-glucuronate. Its activity is regulated as follows. Partially inhibited by divalent metal ions such as calcium, copper, iron and mercury. Its function is as follows. Catalyzes the hydrolysis of oligosaccharides with unsaturated glucuronyl residues at the non-reducing terminal, to a sugar or an amino sugar, and an unsaturated D-glucuronic acid (GlcA), which is nonenzymatically converted immediately to alpha-keto acid. The chain is Unsaturated glucuronyl hydrolase (ugl) from Bacillus sp. (strain GL1).